We begin with the raw amino-acid sequence, 155 residues long: uncharacterized protein (155 aa).

Residues 4–65 (IDEIDEIIVR…VVDTSFFGEF (62 aa)) enclose the HTH asnC-type domain. The segment at residues 23-42 (LTELGKKVGLTASAVKNRIE) is a DNA-binding region (H-T-H motif).

This is an uncharacterized protein from Pyrococcus abyssi (strain GE5 / Orsay).